We begin with the raw amino-acid sequence, 66 residues long: MLKNFKNFTLEDMKAKRLELKKEYLDLRFKSVVGHVENPLKKREIRRDIARLNTMICEYELGIRKV.

It belongs to the universal ribosomal protein uL29 family.

In Borreliella burgdorferi (strain ZS7) (Borrelia burgdorferi), this protein is Large ribosomal subunit protein uL29.